We begin with the raw amino-acid sequence, 363 residues long: MAAISASAPYVARDRDLRNRALVRGWLYVVLLVLFALVLVGGATRLTESGLSITQWQPIHGVIPPLNDAEWQEEFQRYQQIPQYTELNKGMSIEAFKSIFWWEWAHRLLARSVGLVFALPLLFFWVSRRIERGLGPKLVGILLLGGLQGAIGWWMVASGLVDRVSVSQYRLATHLTLAALIFTATMVVARGLAPHSEPAADRSTQRLAGFIVLLALIQIYLGGLVAGLDAGLSYNTWPLMDGKIIPGDLLILEPAWRNFFESPKTVQFVHRLGAYTVFAVALWHMIATRRRLPGSTHARRATLLFVLVLVQASIGIGTLLMQVPLHMALTHQGFALIVLGFAAAHWRGTKGAYPLPQEIVLRS.

8 consecutive transmembrane segments (helical) span residues 21-41 (ALVR…VLVG), 107-127 (RLLA…FWVS), 138-158 (LVGI…MVAS), 174-194 (HLTL…GLAP), 207-227 (LAGF…LVAG), 268-288 (FVHR…MIAT), 301-321 (ATLL…TLLM), and 323-343 (VPLH…GFAA). Residue histidine 270 coordinates heme. Residue histidine 331 coordinates heme.

The protein belongs to the COX15/CtaA family. Type 2 subfamily. As to quaternary structure, interacts with CtaB. It depends on heme b as a cofactor.

The protein localises to the cell membrane. The enzyme catalyses Fe(II)-heme o + 2 A + H2O = Fe(II)-heme a + 2 AH2. It participates in porphyrin-containing compound metabolism; heme A biosynthesis; heme A from heme O: step 1/1. Its function is as follows. Catalyzes the conversion of heme O to heme A by two successive hydroxylations of the methyl group at C8. The first hydroxylation forms heme I, the second hydroxylation results in an unstable dihydroxymethyl group, which spontaneously dehydrates, resulting in the formyl group of heme A. This chain is Heme A synthase, found in Mesorhizobium japonicum (strain LMG 29417 / CECT 9101 / MAFF 303099) (Mesorhizobium loti (strain MAFF 303099)).